We begin with the raw amino-acid sequence, 132 residues long: Small ribosomal subunit protein uS12 (132 aa).

Aspartate 89 carries the post-translational modification 3-methylthioaspartic acid.

It belongs to the universal ribosomal protein uS12 family. As to quaternary structure, part of the 30S ribosomal subunit. Contacts proteins S8 and S17. May interact with IF1 in the 30S initiation complex.

In terms of biological role, with S4 and S5 plays an important role in translational accuracy. Functionally, interacts with and stabilizes bases of the 16S rRNA that are involved in tRNA selection in the A site and with the mRNA backbone. Located at the interface of the 30S and 50S subunits, it traverses the body of the 30S subunit contacting proteins on the other side and probably holding the rRNA structure together. The combined cluster of proteins S8, S12 and S17 appears to hold together the shoulder and platform of the 30S subunit. In Campylobacter curvus (strain 525.92), this protein is Small ribosomal subunit protein uS12.